The chain runs to 210 residues: Cytochrome c4 (210 aa).

The signal sequence occupies residues 1–20 (MNKVLVSLLLTLGITGMAHA). Heme c is bound by residues C34, C37, H38, M86, C139, C142, H143, and M187.

Post-translationally, binds 2 heme c groups covalently per subunit.

The protein resides in the periplasm. Diheme, high potential cytochrome c believed to be an intermediate electron donor to terminal oxidation systems. The polypeptide is Cytochrome c4 (cc4) (Stutzerimonas stutzeri (Pseudomonas stutzeri)).